The following is a 355-amino-acid chain: UDP-galactose translocator 1 (355 aa).

The tract at residues 1–36 (MKFQNVHISHQDEDKEKLLPNDKDVEKADESPSSSR) is disordered. Positions 9-30 (SHQDEDKEKLLPNDKDVEKADE) are enriched in basic and acidic residues. 6 consecutive transmembrane segments (helical) span residues 40–60 (VFKC…TLTI), 177–197 (WMAI…NVSA), 211–231 (IVGL…GVYF), 282–302 (VWAV…VMRY), 309–329 (SMAS…IFPD), and 330–350 (IFIG…VLLY).

This sequence belongs to the nucleotide-sugar transporter family. SLC35A subfamily.

The protein localises to the membrane. It localises to the cytoplasmic granule membrane. The sequence is that of UDP-galactose translocator 1 (ugtp-1) from Caenorhabditis elegans.